We begin with the raw amino-acid sequence, 294 residues long: Nucleoside-specific channel-forming protein Tsx (294 aa).

Positions 1 to 22 (MKKTLLAAGAVLALSSSFTVNA) are cleaved as a signal peptide.

Belongs to the nucleoside-specific channel-forming outer membrane porin (Tsx) (TC 1.B.10) family.

The protein localises to the cell outer membrane. Functionally, functions as a substrate-specific channel for nucleosides and deoxynucleosides. This is Nucleoside-specific channel-forming protein Tsx (tsx) from Escherichia coli O157:H7.